The following is a 115-amino-acid chain: MNMIMAMLANISISSCLIIIAFWLPHLNIYTEKASPYECGFDPMSSARLPFSMKFFLVGITFLLFDLEIALLLPLPWALHSTNMFLTTLTSFILVSVLALGLAYEWMNKGLEWTE.

3 helical membrane passes run 4–24 (IMAMLANISISSCLIIIAFWL), 55–75 (FFLVGITFLLFDLEIALLLPL), and 84–104 (MFLTTLTSFILVSVLALGLAY).

Belongs to the complex I subunit 3 family. In terms of assembly, core subunit of respiratory chain NADH dehydrogenase (Complex I) which is composed of 45 different subunits. Interacts with TMEM186. Interacts with TMEM242.

The protein resides in the mitochondrion inner membrane. The enzyme catalyses a ubiquinone + NADH + 5 H(+)(in) = a ubiquinol + NAD(+) + 4 H(+)(out). In terms of biological role, core subunit of the mitochondrial membrane respiratory chain NADH dehydrogenase (Complex I) which catalyzes electron transfer from NADH through the respiratory chain, using ubiquinone as an electron acceptor. Essential for the catalytic activity of complex I. This is NADH-ubiquinone oxidoreductase chain 3 from Phyllotis darwinii (Darwin's leaf-eared mouse).